The primary structure comprises 380 residues: uncharacterized protein (380 aa).

Belongs to the metallo-dependent hydrolases superfamily.

This is an uncharacterized protein from Methanocaldococcus jannaschii (strain ATCC 43067 / DSM 2661 / JAL-1 / JCM 10045 / NBRC 100440) (Methanococcus jannaschii).